Reading from the N-terminus, the 153-residue chain is NADPH-dependent 7-cyano-7-deazaguanine reductase (153 aa).

A disordered region spans residues 1–26; sequence MVKIHDGASQLGANVAAPRSPEEATL. Cys-51 acts as the Thioimide intermediate in catalysis. Asp-58 serves as the catalytic Proton donor. Substrate is bound by residues 73–75 and 92–93; these read VES and HE.

The protein belongs to the GTP cyclohydrolase I family. QueF type 1 subfamily.

The protein resides in the cytoplasm. The enzyme catalyses 7-aminomethyl-7-carbaguanine + 2 NADP(+) = 7-cyano-7-deazaguanine + 2 NADPH + 3 H(+). It participates in tRNA modification; tRNA-queuosine biosynthesis. Functionally, catalyzes the NADPH-dependent reduction of 7-cyano-7-deazaguanine (preQ0) to 7-aminomethyl-7-deazaguanine (preQ1). The chain is NADPH-dependent 7-cyano-7-deazaguanine reductase from Methylocella silvestris (strain DSM 15510 / CIP 108128 / LMG 27833 / NCIMB 13906 / BL2).